The sequence spans 235 residues: Protein CIST1 (235 aa).

Residues 1-31 form the signal peptide; it reads MASSQPPLPPPPPPLLLLALLLLLKVSDTSS. Low complexity-rich tracts occupy residues 28–61 and 76–110; these read DTSSSVSTATSTASETDNLTSKPLTSSFSSSSPT and STSHPDSSSSESTISHSPSNSGTTSTTQPTSSQPE. The segment at 28–159 is disordered; it reads DTSSSVSTAT…TGPPSVSLAT (132 aa). At 32–184 the chain is on the extracellular side; that stretch reads SVSTATSTAS…GVPRLHRNPG (153 aa). An N-linked (GlcNAc...) asparagine glycan is attached at N45. The span at 114–136 shows a compositional bias: polar residues; it reads HPSSGSPSSEHTVTSPSLGSVSL. The helical transmembrane segment at 185 to 205 threads the bilayer; sequence VVVAVCLLVSALLIGGAIMAV. The Cytoplasmic portion of the chain corresponds to 206-235; it reads RRCHNGVSEFQKLDEGLVSRRSSSAHHTLP.

In terms of tissue distribution, highly expressed in large intestine, small intestine, rumen, and kidney tissues.

The protein resides in the membrane. This Bos taurus (Bovine) protein is Protein CIST1 (CIST1).